A 1245-amino-acid polypeptide reads, in one-letter code: ATP-dependent helicase/nuclease subunit A (1245 aa).

The 474-residue stretch at 4–477 (TKWTDEQLSA…IQLYKNFRSR (474 aa)) folds into the UvrD-like helicase ATP-binding domain. An ATP-binding site is contributed by 25–32 (AAAGSGKT). The 299-residue stretch at 517–815 (KFKDTIVGGP…RIMSIHKSKG (299 aa)) folds into the UvrD-like helicase C-terminal domain.

This sequence belongs to the helicase family. AddA subfamily. Heterodimer of AddA and AddB/RexB. Requires Mg(2+) as cofactor.

The enzyme catalyses Couples ATP hydrolysis with the unwinding of duplex DNA by translocating in the 3'-5' direction.. It carries out the reaction ATP + H2O = ADP + phosphate + H(+). Functionally, the heterodimer acts as both an ATP-dependent DNA helicase and an ATP-dependent, dual-direction single-stranded exonuclease. Recognizes the chi site generating a DNA molecule suitable for the initiation of homologous recombination. The AddA nuclease domain is required for chi fragment generation; this subunit has the helicase and 3' -&gt; 5' nuclease activities. This chain is ATP-dependent helicase/nuclease subunit A, found in Clostridium beijerinckii (strain ATCC 51743 / NCIMB 8052) (Clostridium acetobutylicum).